Consider the following 692-residue polypeptide: Aspartate--tRNA ligase, mitochondrial (692 aa).

The transit peptide at 1-61 (MNRVILKDSK…RNFTNTINNN (61 aa)) directs the protein to the mitochondrion. Residue Glu264 coordinates L-aspartate. The aspartate stretch occupies residues 287 to 290 (QQYK). Arg309 is an L-aspartate binding site. ATP contacts are provided by residues 309–311 (RDE) and Glu590. Arg597 serves as a coordination point for L-aspartate. 642–645 (GFDR) lines the ATP pocket.

The protein belongs to the class-II aminoacyl-tRNA synthetase family. Type 1 subfamily.

The protein localises to the mitochondrion matrix. It carries out the reaction tRNA(Asp) + L-aspartate + ATP = L-aspartyl-tRNA(Asp) + AMP + diphosphate. The chain is Aspartate--tRNA ligase, mitochondrial (maspS) from Dictyostelium discoideum (Social amoeba).